Consider the following 181-residue polypeptide: GTP cyclohydrolase 1 2 (181 aa).

It belongs to the GTP cyclohydrolase I family. In terms of assembly, homomer.

The enzyme catalyses GTP + H2O = 7,8-dihydroneopterin 3'-triphosphate + formate + H(+). It functions in the pathway cofactor biosynthesis; 7,8-dihydroneopterin triphosphate biosynthesis; 7,8-dihydroneopterin triphosphate from GTP: step 1/1. The protein is GTP cyclohydrolase 1 2 (folE2) of Pseudomonas aeruginosa (strain ATCC 15692 / DSM 22644 / CIP 104116 / JCM 14847 / LMG 12228 / 1C / PRS 101 / PAO1).